A 294-amino-acid chain; its full sequence is Ferredoxin--NADP reductase (294 aa).

The 125-residue stretch at 13-137 (KNPYIGKCLS…TGPVGKEMLL (125 aa)) folds into the FAD-binding FR-type domain. FAD contacts are provided by residues 72–75 (RLYS), 93–95 (CVR), Tyr99, 111–113 (VCS), and Thr152. NADP(+) is bound by residues Ser75 and Arg95. NADP(+) is bound by residues Thr152, 184 to 185 (IP), 214 to 215 (SR), Lys224, 224 to 228 (KMYIQ), 253 to 254 (GL), and Glu292.

The protein belongs to the ferredoxin--NADP reductase type 1 family. Requires FAD as cofactor.

The protein resides in the cellular thylakoid membrane. It carries out the reaction 2 reduced [2Fe-2S]-[ferredoxin] + NADP(+) + H(+) = 2 oxidized [2Fe-2S]-[ferredoxin] + NADPH. The protein is Ferredoxin--NADP reductase (petH) of Spirulina sp.